The sequence spans 547 residues: Aspartate 1-decarboxylase (547 aa).

N6-(pyridoxal phosphate)lysine is present on Lys-338.

The protein belongs to the group II decarboxylase family. It depends on pyridoxal 5'-phosphate as a cofactor.

It catalyses the reaction L-aspartate + H(+) = beta-alanine + CO2. It functions in the pathway cofactor biosynthesis; (R)-pantothenate biosynthesis; beta-alanine from L-aspartate: step 1/1. In terms of biological role, catalyzes the pyridoxal-dependent decarboxylation of aspartate to produce beta-alanine. Has weak activity with glutamate. The protein is Aspartate 1-decarboxylase of Aliivibrio fischeri (strain ATCC 700601 / ES114) (Vibrio fischeri).